The primary structure comprises 1411 residues: ATP-dependent permease PDR11 (1411 aa).

The Cytoplasmic segment spans residues 2-388 (SLSKYFNPIP…IGDRNYLISQ (387 aa)). Residues 31-273 (VQNDEESASE…FHDTLQIKKN (243 aa)) enclose the ABC transporter 1 domain. Residues 389 to 409 (FVSVVVQSLVIGSLFYNIPLT) form a helical membrane-spanning segment. At 410-418 (TIGSFSRGS) the chain is on the extracellular side. A helical transmembrane segment spans residues 419 to 439 (LTFFSILFFTFLSLADMPASF). Residues 440–471 (QRQPVVRKHVQLHFYYNWVETLATNFFDCCSK) are Cytoplasmic-facing. A helical membrane pass occupies residues 472–492 (FILVVIFTIILYFLAHLQYNA). At 493–494 (AR) the chain is on the extracellular side. A helical transmembrane segment spans residues 495–515 (FFIFLLFLSVYNFCMVSLFAL). Topologically, residues 516 to 524 (TALIAPTLS) are cytoplasmic. Residues 525–545 (MANLLAGILLLAIAMYASYVI) form a helical membrane-spanning segment. At 546 to 636 (YMKDMHPWFI…YTYHHVWRNF (91 aa)) the chain is on the extracellular side. Residue Asn-595 is glycosylated (N-linked (GlcNAc...) asparagine). A helical transmembrane segment spans residues 637 to 657 (GIIIGFLCFFLFCSLLAAEYI). The Cytoplasmic portion of the chain corresponds to 658-1090 (TPLFTRENLL…QYICTKRDMT (433 aa)). Positions 751 to 979 (ISWKNINYTI…FVAHDRRLTF (229 aa)) constitute an ABC transporter 2 domain. An ATP-binding site is contributed by 782–789 (GESGAGKT). A helical transmembrane segment spans residues 1091–1111 (YVFAKYALNAGAGLFIGFSFW). At 1112 to 1117 (RTKHNI) the chain is on the extracellular side. Residues 1118–1138 (NGLQDAIFLCFMMLCVSSPLI) traverse the membrane as a helical segment. The Cytoplasmic segment spans residues 1139-1175 (NQVQDKALQSKEVYIAREARSNTYHWTVLLIAQTIVE). The chain crosses the membrane as a helical span at residues 1176 to 1196 (LPLAISSSTLFFLCCYFCCGF). Over 1197–1204 (ETSARVAG) the chain is Extracellular. Residues 1205 to 1225 (VFYLNYILFSMYYLSFGLWLL) form a helical membrane-spanning segment. Over 1226 to 1230 (YSAPD) the chain is Cytoplasmic. Residues 1231–1251 (LQTAAVFVAFLYSFTASFCGV) form a helical membrane-spanning segment. The Extracellular portion of the chain corresponds to 1252–1355 (MQPYSLFPRF…NMSYHHRWRN (104 aa)). N-linked (GlcNAc...) asparagine glycosylation is found at Asn-1289, Asn-1324, and Asn-1346. A helical membrane pass occupies residues 1356 to 1376 (FGFEWVFVCFNIAAMFVGFYL). The Cytoplasmic portion of the chain corresponds to 1377–1411 (TYIKKIWPSVIDGIKKCIPSMRRSKTSHNPNEQSV).

This sequence belongs to the ABC transporter superfamily. ABCG family. PDR (TC 3.A.1.205) subfamily.

Its subcellular location is the membrane. In terms of biological role, transporter involved in the uptake of sterol. The protein is ATP-dependent permease PDR11 (PDR11) of Saccharomyces cerevisiae (strain ATCC 204508 / S288c) (Baker's yeast).